The following is a 215-amino-acid chain: Pyridoxine/pyridoxamine 5'-phosphate oxidase (215 aa).

Residues 11–14 (RRDY) and Lys-69 each bind substrate. FMN contacts are provided by residues 64–69 (RVVLLK), 79–80 (YT), Lys-86, and Gln-108. Positions 126, 130, and 134 each coordinate substrate. Residues 143–144 (QS) and Trp-188 contribute to the FMN site. 194 to 196 (RLH) provides a ligand contact to substrate. Arg-198 contacts FMN.

The protein belongs to the pyridoxamine 5'-phosphate oxidase family. As to quaternary structure, homodimer. It depends on FMN as a cofactor.

It catalyses the reaction pyridoxamine 5'-phosphate + O2 + H2O = pyridoxal 5'-phosphate + H2O2 + NH4(+). The enzyme catalyses pyridoxine 5'-phosphate + O2 = pyridoxal 5'-phosphate + H2O2. It participates in cofactor metabolism; pyridoxal 5'-phosphate salvage; pyridoxal 5'-phosphate from pyridoxamine 5'-phosphate: step 1/1. The protein operates within cofactor metabolism; pyridoxal 5'-phosphate salvage; pyridoxal 5'-phosphate from pyridoxine 5'-phosphate: step 1/1. Functionally, catalyzes the oxidation of either pyridoxine 5'-phosphate (PNP) or pyridoxamine 5'-phosphate (PMP) into pyridoxal 5'-phosphate (PLP). The sequence is that of Pyridoxine/pyridoxamine 5'-phosphate oxidase from Legionella pneumophila (strain Lens).